The chain runs to 287 residues: UPF0098 protein AF_1698 (287 aa).

It belongs to the UPF0098 family.

This chain is UPF0098 protein AF_1698, found in Archaeoglobus fulgidus (strain ATCC 49558 / DSM 4304 / JCM 9628 / NBRC 100126 / VC-16).